A 353-amino-acid chain; its full sequence is Ubiquinol oxidase 2, mitochondrial (353 aa).

Residues 1-21 (MSQLITKAALRVLLVCGRGNC) constitute a mitochondrion transit peptide. A helical transmembrane segment spans residues 178–198 (AMMLETVAAVPGMVGGMLLHL). Fe cation contacts are provided by E182, E221, and H224. A helical transmembrane segment spans residues 240–260 (LLVMLVQGIFFNSFFVCYVIS). Residues E272, E323, and H326 each contribute to the Fe cation site.

It belongs to the alternative oxidase family. In terms of assembly, homodimer; disulfide-linked. Requires Fe cation as cofactor. Maximally expressed in dry seeds. Detected in roots, stems and leaves.

The protein localises to the mitochondrion inner membrane. It catalyses the reaction 2 a ubiquinol + O2 = 2 a ubiquinone + 2 H2O. Catalyzes the cyanide-resistant oxidation of ubiquinol and the reduction of molecular oxygen to water, but does not translocate protons and consequently is not linked to oxidative phosphorylation. May increase respiration when the cytochrome respiratory pathway is restricted, or in response to low temperatures. The polypeptide is Ubiquinol oxidase 2, mitochondrial (AOX2) (Arabidopsis thaliana (Mouse-ear cress)).